The following is a 349-amino-acid chain: tRNA pseudouridine synthase D (349 aa).

Phe-27 is a binding site for substrate. Catalysis depends on Asp-80, which acts as the Nucleophile. Substrate is bound at residue Asn-129. In terms of domain architecture, TRUD spans 155–303 (GVPNYFGAQR…VEAARRAMLL (149 aa)). Residue Phe-329 coordinates substrate.

The protein belongs to the pseudouridine synthase TruD family.

It carries out the reaction uridine(13) in tRNA = pseudouridine(13) in tRNA. Its function is as follows. Responsible for synthesis of pseudouridine from uracil-13 in transfer RNAs. The chain is tRNA pseudouridine synthase D from Escherichia coli O7:K1 (strain IAI39 / ExPEC).